The following is an 89-amino-acid chain: Small ribosomal subunit protein uS15 (89 aa).

This sequence belongs to the universal ribosomal protein uS15 family. In terms of assembly, part of the 30S ribosomal subunit. Forms a bridge to the 50S subunit in the 70S ribosome, contacting the 23S rRNA.

Functionally, one of the primary rRNA binding proteins, it binds directly to 16S rRNA where it helps nucleate assembly of the platform of the 30S subunit by binding and bridging several RNA helices of the 16S rRNA. Its function is as follows. Forms an intersubunit bridge (bridge B4) with the 23S rRNA of the 50S subunit in the ribosome. The protein is Small ribosomal subunit protein uS15 of Salinispora arenicola (strain CNS-205).